We begin with the raw amino-acid sequence, 61 residues long: Small ribosomal subunit protein uS14 (61 aa).

Cys24, Cys27, Cys40, and Cys43 together coordinate Zn(2+).

This sequence belongs to the universal ribosomal protein uS14 family. Zinc-binding uS14 subfamily. In terms of assembly, part of the 30S ribosomal subunit. Contacts proteins S3 and S10. It depends on Zn(2+) as a cofactor.

Functionally, binds 16S rRNA, required for the assembly of 30S particles and may also be responsible for determining the conformation of the 16S rRNA at the A site. This is Small ribosomal subunit protein uS14 from Oleidesulfovibrio alaskensis (strain ATCC BAA-1058 / DSM 17464 / G20) (Desulfovibrio alaskensis).